The sequence spans 462 residues: ATP synthase subunit beta (462 aa).

151 to 158 (GGAGVGKT) provides a ligand contact to ATP.

It belongs to the ATPase alpha/beta chains family. As to quaternary structure, F-type ATPases have 2 components, CF(1) - the catalytic core - and CF(0) - the membrane proton channel. CF(1) has five subunits: alpha(3), beta(3), gamma(1), delta(1), epsilon(1). CF(0) has four main subunits: a(1), b(1), b'(1) and c(9-12).

The protein resides in the cell inner membrane. It carries out the reaction ATP + H2O + 4 H(+)(in) = ADP + phosphate + 5 H(+)(out). Produces ATP from ADP in the presence of a proton gradient across the membrane. The catalytic sites are hosted primarily by the beta subunits. The protein is ATP synthase subunit beta of Chlorobium phaeobacteroides (strain BS1).